The sequence spans 463 residues: Type IV secretion system protein PtlD homolog (463 aa).

Positions 1–24 (MAGLSRILLSCTLACLLAGQAAQA) are cleaved as a signal peptide. 5 helical membrane passes run 118-138 (LQPLVYSMMTLLVLLTGYALL), 232-252 (WLLCAMIVATSAGGWLCLAAS), 253-273 (LLIVPGLIVTLLLSLGPLFLV), 294-314 (ALVFMALGTPAVGLLSDVLAG), and 333-353 (MLAATLCATATLMLLTLVPLA). Over residues 376 to 410 (AHRQAAARQYAPRPAAAAAAAGPHQAGTYAASATP) the composition is skewed to low complexity. Residues 376 to 463 (AHRQAAARQY…RVLPRKPNLP (88 aa)) are disordered. Over residues 411-420 (APAPARPAPS) the composition is skewed to pro residues. Basic and acidic residues predominate over residues 441 to 455 (VRRDDRPAPAPDRRV).

It localises to the cell membrane. This Bordetella parapertussis (strain 12822 / ATCC BAA-587 / NCTC 13253) protein is Type IV secretion system protein PtlD homolog (ptlD).